Reading from the N-terminus, the 67-residue chain is Large ribosomal subunit protein uL29 (67 aa).

The protein belongs to the universal ribosomal protein uL29 family.

This Zymomonas mobilis subsp. mobilis (strain ATCC 31821 / ZM4 / CP4) protein is Large ribosomal subunit protein uL29.